The chain runs to 101 residues: Ribonuclease kappa-A (101 aa).

Transmembrane regions (helical) follow at residues 13 to 33 (ACGI…GVFF) and 68 to 88 (VSYN…FSFC).

It belongs to the RNase K family.

The protein localises to the membrane. Functionally, endoribonuclease which preferentially cleaves ApU and ApG phosphodiester bonds. The polypeptide is Ribonuclease kappa-A (rnasek-a) (Xenopus laevis (African clawed frog)).